A 523-amino-acid chain; its full sequence is NAD(P)H-quinone oxidoreductase subunit 2 (523 aa).

13 consecutive transmembrane segments (helical) span residues 29–49 (AVLP…VDLA), 57–77 (WVPP…ALQW), 94–114 (LAVA…LISW), 132–152 (LAAT…SIFI), 182–202 (LLVG…LYGL), 221–241 (PIAA…IAAV), 255–275 (PTPV…ALAL), 291–311 (LLFT…ALAQ), 317–337 (MLAY…VCGT), 345–365 (VLYM…IILF), 389–409 (LGLS…GFFG), 424–444 (LLVV…ISVI), and 477–497 (VALI…NPLF).

Belongs to the complex I subunit 2 family. In terms of assembly, NDH-1 can be composed of about 15 different subunits; different subcomplexes with different compositions have been identified which probably have different functions.

It is found in the cellular thylakoid membrane. The catalysed reaction is a plastoquinone + NADH + (n+1) H(+)(in) = a plastoquinol + NAD(+) + n H(+)(out). It catalyses the reaction a plastoquinone + NADPH + (n+1) H(+)(in) = a plastoquinol + NADP(+) + n H(+)(out). Functionally, NDH-1 shuttles electrons from an unknown electron donor, via FMN and iron-sulfur (Fe-S) centers, to quinones in the respiratory and/or the photosynthetic chain. The immediate electron acceptor for the enzyme in this species is believed to be plastoquinone. Couples the redox reaction to proton translocation, and thus conserves the redox energy in a proton gradient. Cyanobacterial NDH-1 also plays a role in inorganic carbon-concentration. The protein is NAD(P)H-quinone oxidoreductase subunit 2 of Synechococcus sp. (strain CC9902).